A 125-amino-acid chain; its full sequence is Large ribosomal subunit protein bL12 (125 aa).

It belongs to the bacterial ribosomal protein bL12 family. As to quaternary structure, homodimer. Part of the ribosomal stalk of the 50S ribosomal subunit. Forms a multimeric L10(L12)X complex, where L10 forms an elongated spine to which 2 to 4 L12 dimers bind in a sequential fashion. Binds GTP-bound translation factors.

Its function is as follows. Forms part of the ribosomal stalk which helps the ribosome interact with GTP-bound translation factors. Is thus essential for accurate translation. The polypeptide is Large ribosomal subunit protein bL12 (Ruegeria sp. (strain TM1040) (Silicibacter sp.)).